A 156-amino-acid chain; its full sequence is ATP synthase subunit b (156 aa).

A helical transmembrane segment spans residues 11-31; the sequence is AIAFVLFVLFCMKYVWPPLMA.

Belongs to the ATPase B chain family. F-type ATPases have 2 components, F(1) - the catalytic core - and F(0) - the membrane proton channel. F(1) has five subunits: alpha(3), beta(3), gamma(1), delta(1), epsilon(1). F(0) has three main subunits: a(1), b(2) and c(10-14). The alpha and beta chains form an alternating ring which encloses part of the gamma chain. F(1) is attached to F(0) by a central stalk formed by the gamma and epsilon chains, while a peripheral stalk is formed by the delta and b chains.

The protein localises to the cell inner membrane. In terms of biological role, f(1)F(0) ATP synthase produces ATP from ADP in the presence of a proton or sodium gradient. F-type ATPases consist of two structural domains, F(1) containing the extramembraneous catalytic core and F(0) containing the membrane proton channel, linked together by a central stalk and a peripheral stalk. During catalysis, ATP synthesis in the catalytic domain of F(1) is coupled via a rotary mechanism of the central stalk subunits to proton translocation. Its function is as follows. Component of the F(0) channel, it forms part of the peripheral stalk, linking F(1) to F(0). The polypeptide is ATP synthase subunit b (Sodalis glossinidius (strain morsitans)).